A 361-amino-acid chain; its full sequence is S-adenosylmethionine:tRNA ribosyltransferase-isomerase (361 aa).

This sequence belongs to the QueA family. As to quaternary structure, monomer.

It localises to the cytoplasm. It carries out the reaction 7-aminomethyl-7-carbaguanosine(34) in tRNA + S-adenosyl-L-methionine = epoxyqueuosine(34) in tRNA + adenine + L-methionine + 2 H(+). It functions in the pathway tRNA modification; tRNA-queuosine biosynthesis. Functionally, transfers and isomerizes the ribose moiety from AdoMet to the 7-aminomethyl group of 7-deazaguanine (preQ1-tRNA) to give epoxyqueuosine (oQ-tRNA). The sequence is that of S-adenosylmethionine:tRNA ribosyltransferase-isomerase from Methylocella silvestris (strain DSM 15510 / CIP 108128 / LMG 27833 / NCIMB 13906 / BL2).